A 181-amino-acid polypeptide reads, in one-letter code: Large ribosomal subunit protein uL10 (181 aa).

This sequence belongs to the universal ribosomal protein uL10 family. In terms of assembly, part of the ribosomal stalk of the 50S ribosomal subunit. The N-terminus interacts with L11 and the large rRNA to form the base of the stalk. The C-terminus forms an elongated spine to which L12 dimers bind in a sequential fashion forming a multimeric L10(L12)X complex.

Forms part of the ribosomal stalk, playing a central role in the interaction of the ribosome with GTP-bound translation factors. This Bradyrhizobium diazoefficiens (strain JCM 10833 / BCRC 13528 / IAM 13628 / NBRC 14792 / USDA 110) protein is Large ribosomal subunit protein uL10.